A 203-amino-acid polypeptide reads, in one-letter code: SCO2-like protein RT0576 (203 aa).

In terms of domain architecture, Thioredoxin spans 42-203 (KDNIKIGEAF…KEIMEFLRNE (162 aa)). Cu cation-binding residues include cysteine 80, cysteine 84, and histidine 170.

This sequence belongs to the SCO1/2 family.

The chain is SCO2-like protein RT0576 from Rickettsia typhi (strain ATCC VR-144 / Wilmington).